A 331-amino-acid polypeptide reads, in one-letter code: UPF0194 membrane protein CKO_02332 (331 aa).

The N-terminal stretch at 1-15 is a signal peptide; it reads MKKPVVIALAVAALA. The stretch at 142–207 forms a coiled coil; it reads ISANDLENAR…ELDLQDTTLI (66 aa).

The protein belongs to the UPF0194 family.

It is found in the periplasm. The sequence is that of UPF0194 membrane protein CKO_02332 from Citrobacter koseri (strain ATCC BAA-895 / CDC 4225-83 / SGSC4696).